Reading from the N-terminus, the 638-residue chain is Chaperone protein DnaK (638 aa).

At Thr198 the chain carries Phosphothreonine; by autocatalysis. A disordered region spans residues 599 to 638 (IYESQQAEGGAEGGPSGHHDDGIVDADYEEVKDDNTKKSA). The segment covering 621–630 (IVDADYEEVK) has biased composition (acidic residues).

The protein belongs to the heat shock protein 70 family.

Acts as a chaperone. The polypeptide is Chaperone protein DnaK (Allorhizobium ampelinum (strain ATCC BAA-846 / DSM 112012 / S4) (Agrobacterium vitis (strain S4))).